A 104-amino-acid polypeptide reads, in one-letter code: uncharacterized protein (104 aa).

The helical transmembrane segment at 81-97 (CLLMLPCISVVMSISSV) threads the bilayer.

Its subcellular location is the cell membrane. This is an uncharacterized protein from Bacillus subtilis (strain 168).